The following is a 425-amino-acid chain: Serine--tRNA ligase (425 aa).

230–232 (TAE) serves as a coordination point for L-serine. Residue 261 to 263 (RAE) coordinates ATP. Glu284 contacts L-serine. Residue 348 to 351 (EISS) participates in ATP binding. Ser384 is a binding site for L-serine.

It belongs to the class-II aminoacyl-tRNA synthetase family. Type-1 seryl-tRNA synthetase subfamily. Homodimer. The tRNA molecule binds across the dimer.

It is found in the cytoplasm. The enzyme catalyses tRNA(Ser) + L-serine + ATP = L-seryl-tRNA(Ser) + AMP + diphosphate + H(+). The catalysed reaction is tRNA(Sec) + L-serine + ATP = L-seryl-tRNA(Sec) + AMP + diphosphate + H(+). It participates in aminoacyl-tRNA biosynthesis; selenocysteinyl-tRNA(Sec) biosynthesis; L-seryl-tRNA(Sec) from L-serine and tRNA(Sec): step 1/1. Functionally, catalyzes the attachment of serine to tRNA(Ser). Is also able to aminoacylate tRNA(Sec) with serine, to form the misacylated tRNA L-seryl-tRNA(Sec), which will be further converted into selenocysteinyl-tRNA(Sec). This is Serine--tRNA ligase from Desulforudis audaxviator (strain MP104C).